Here is a 570-residue protein sequence, read N- to C-terminus: Dihydroxy-acid dehydratase (570 aa).

Cysteine 61 is a binding site for [2Fe-2S] cluster. Aspartate 94 is a Mg(2+) binding site. Cysteine 135 lines the [2Fe-2S] cluster pocket. Mg(2+) contacts are provided by aspartate 136 and lysine 137. At lysine 137 the chain carries N6-carboxylysine. [2Fe-2S] cluster is bound at residue cysteine 207. Glutamate 459 serves as a coordination point for Mg(2+). The Proton acceptor role is filled by serine 485.

The protein belongs to the IlvD/Edd family. Homodimer. The cofactor is [2Fe-2S] cluster. Requires Mg(2+) as cofactor.

It catalyses the reaction (2R)-2,3-dihydroxy-3-methylbutanoate = 3-methyl-2-oxobutanoate + H2O. The enzyme catalyses (2R,3R)-2,3-dihydroxy-3-methylpentanoate = (S)-3-methyl-2-oxopentanoate + H2O. It participates in amino-acid biosynthesis; L-isoleucine biosynthesis; L-isoleucine from 2-oxobutanoate: step 3/4. It functions in the pathway amino-acid biosynthesis; L-valine biosynthesis; L-valine from pyruvate: step 3/4. Its function is as follows. Functions in the biosynthesis of branched-chain amino acids. Catalyzes the dehydration of (2R,3R)-2,3-dihydroxy-3-methylpentanoate (2,3-dihydroxy-3-methylvalerate) into 2-oxo-3-methylpentanoate (2-oxo-3-methylvalerate) and of (2R)-2,3-dihydroxy-3-methylbutanoate (2,3-dihydroxyisovalerate) into 2-oxo-3-methylbutanoate (2-oxoisovalerate), the penultimate precursor to L-isoleucine and L-valine, respectively. This Lactococcus lactis subsp. cremoris (strain SK11) protein is Dihydroxy-acid dehydratase.